A 378-amino-acid chain; its full sequence is Glutamate 5-kinase (378 aa).

Lys17 lines the ATP pocket. The substrate site is built by Ser58, Asp145, and Asn157. ATP-binding positions include 177–178 (TD) and 221–227 (TGGMMTK). Positions 286 to 364 (VGKLYLDSGA…KEIPTILGYV (79 aa)) constitute a PUA domain.

It belongs to the glutamate 5-kinase family.

It is found in the cytoplasm. The catalysed reaction is L-glutamate + ATP = L-glutamyl 5-phosphate + ADP. Its pathway is amino-acid biosynthesis; L-proline biosynthesis; L-glutamate 5-semialdehyde from L-glutamate: step 1/2. In terms of biological role, catalyzes the transfer of a phosphate group to glutamate to form L-glutamate 5-phosphate. The sequence is that of Glutamate 5-kinase from Nostoc sp. (strain PCC 7120 / SAG 25.82 / UTEX 2576).